Consider the following 241-residue polypeptide: Phosphoribosylaminoimidazole-succinocarboxamide synthase (241 aa).

The protein belongs to the SAICAR synthetase family.

It carries out the reaction 5-amino-1-(5-phospho-D-ribosyl)imidazole-4-carboxylate + L-aspartate + ATP = (2S)-2-[5-amino-1-(5-phospho-beta-D-ribosyl)imidazole-4-carboxamido]succinate + ADP + phosphate + 2 H(+). It participates in purine metabolism; IMP biosynthesis via de novo pathway; 5-amino-1-(5-phospho-D-ribosyl)imidazole-4-carboxamide from 5-amino-1-(5-phospho-D-ribosyl)imidazole-4-carboxylate: step 1/2. This is Phosphoribosylaminoimidazole-succinocarboxamide synthase (purC) from Bacillus subtilis (strain 168).